We begin with the raw amino-acid sequence, 205 residues long: LexA repressor (205 aa).

A DNA-binding region (H-T-H motif) is located at residues 28–48 (RAELMRAFDFRSPNAAESHLR). Residues serine 120 and lysine 159 each act as for autocatalytic cleavage activity in the active site.

It belongs to the peptidase S24 family. As to quaternary structure, homodimer.

It carries out the reaction Hydrolysis of Ala-|-Gly bond in repressor LexA.. Its function is as follows. Represses a number of genes involved in the response to DNA damage (SOS response), including recA and lexA. In the presence of single-stranded DNA, RecA interacts with LexA causing an autocatalytic cleavage which disrupts the DNA-binding part of LexA, leading to derepression of the SOS regulon and eventually DNA repair. The sequence is that of LexA repressor from Acidithiobacillus ferrooxidans (strain ATCC 23270 / DSM 14882 / CIP 104768 / NCIMB 8455) (Ferrobacillus ferrooxidans (strain ATCC 23270)).